The following is a 299-amino-acid chain: Coenzyme PQQ synthesis protein B (299 aa).

It belongs to the PqqB family.

It functions in the pathway cofactor biosynthesis; pyrroloquinoline quinone biosynthesis. In terms of biological role, may be involved in the transport of PQQ or its precursor to the periplasm. This Methylobacterium radiotolerans (strain ATCC 27329 / DSM 1819 / JCM 2831 / NBRC 15690 / NCIMB 10815 / 0-1) protein is Coenzyme PQQ synthesis protein B.